We begin with the raw amino-acid sequence, 271 residues long: Formamidopyrimidine-DNA glycosylase (271 aa).

Pro2 serves as the catalytic Schiff-base intermediate with DNA. The active-site Proton donor is the Glu3. Lys56 functions as the Proton donor; for beta-elimination activity in the catalytic mechanism. Positions 89, 107, and 151 each coordinate DNA. The FPG-type zinc finger occupies 236 to 270; the sequence is NVYGRAGLPCRQCGTPVRLLRQGQRSTYFCPHCQR. The active-site Proton donor; for delta-elimination activity is Arg260.

The protein belongs to the FPG family. Monomer. Requires Zn(2+) as cofactor.

It catalyses the reaction Hydrolysis of DNA containing ring-opened 7-methylguanine residues, releasing 2,6-diamino-4-hydroxy-5-(N-methyl)formamidopyrimidine.. It carries out the reaction 2'-deoxyribonucleotide-(2'-deoxyribose 5'-phosphate)-2'-deoxyribonucleotide-DNA = a 3'-end 2'-deoxyribonucleotide-(2,3-dehydro-2,3-deoxyribose 5'-phosphate)-DNA + a 5'-end 5'-phospho-2'-deoxyribonucleoside-DNA + H(+). Functionally, involved in base excision repair of DNA damaged by oxidation or by mutagenic agents. Acts as a DNA glycosylase that recognizes and removes damaged bases. Has a preference for oxidized purines, such as 7,8-dihydro-8-oxoguanine (8-oxoG). Has AP (apurinic/apyrimidinic) lyase activity and introduces nicks in the DNA strand. Cleaves the DNA backbone by beta-delta elimination to generate a single-strand break at the site of the removed base with both 3'- and 5'-phosphates. In Acidovorax sp. (strain JS42), this protein is Formamidopyrimidine-DNA glycosylase.